Reading from the N-terminus, the 355-residue chain is Alanine racemase (355 aa).

Lysine 34 acts as the Proton acceptor; specific for D-alanine in catalysis. Residue lysine 34 is modified to N6-(pyridoxal phosphate)lysine. Residue arginine 133 participates in substrate binding. Tyrosine 249 serves as the catalytic Proton acceptor; specific for L-alanine. Position 297 (methionine 297) interacts with substrate.

Belongs to the alanine racemase family. Pyridoxal 5'-phosphate serves as cofactor.

The catalysed reaction is L-alanine = D-alanine. It functions in the pathway amino-acid biosynthesis; D-alanine biosynthesis; D-alanine from L-alanine: step 1/1. Its function is as follows. Catalyzes the interconversion of L-alanine and D-alanine. May also act on other amino acids. The protein is Alanine racemase (alr) of Rickettsia peacockii (strain Rustic).